The following is a 464-amino-acid chain: V-type ATP synthase beta chain (464 aa).

This sequence belongs to the ATPase alpha/beta chains family.

Produces ATP from ADP in the presence of a proton gradient across the membrane. The V-type beta chain is a regulatory subunit. The sequence is that of V-type ATP synthase beta chain from Streptococcus sanguinis (strain SK36).